Consider the following 193-residue polypeptide: dTTP/UTP pyrophosphatase (193 aa).

D75 acts as the Proton acceptor in catalysis.

The protein belongs to the Maf family. YhdE subfamily. A divalent metal cation serves as cofactor.

It is found in the cytoplasm. The catalysed reaction is dTTP + H2O = dTMP + diphosphate + H(+). It catalyses the reaction UTP + H2O = UMP + diphosphate + H(+). In terms of biological role, nucleoside triphosphate pyrophosphatase that hydrolyzes dTTP and UTP. May have a dual role in cell division arrest and in preventing the incorporation of modified nucleotides into cellular nucleic acids. This chain is dTTP/UTP pyrophosphatase, found in Chlorobium luteolum (strain DSM 273 / BCRC 81028 / 2530) (Pelodictyon luteolum).